The primary structure comprises 1449 residues: VWFA and cache domain-containing protein CG16868 (1449 aa).

A signal peptide spans 1 to 23 (MWPNSNLNAVLLILAVLACPTSS). At 24–1220 (QHVPLAMANS…NPQREQHAYS (1197 aa)) the chain is on the extracellular side. 6 N-linked (GlcNAc...) asparagine glycosylation sites follow: asparagine 32, asparagine 112, asparagine 153, asparagine 407, asparagine 447, and asparagine 497. The 222-residue stretch at 320–541 (FVLFLIDVGS…TSLPQTSSRI (222 aa)) folds into the VWFA domain. In terms of domain architecture, Cache 1 spans 557 to 639 (VHPPVVDADS…PRPLIQRETS (83 aa)). N-linked (GlcNAc...) asparagine glycosylation is found at asparagine 649, asparagine 668, and asparagine 707. Positions 889 to 934 (TAPYLDAGGAGYIITIAHTIFEGKAHALHSAQQDRPVAVVALDVPY) constitute a Cache 2 domain. N-linked (GlcNAc...) asparagine glycosylation is found at asparagine 1015, asparagine 1025, asparagine 1059, and asparagine 1111. Residues 1221-1241 (AFGPLGGAIVVLVMVIGFAIY) traverse the membrane as a helical segment. The Cytoplasmic segment spans residues 1242-1449 (CYRHNLDAQT…VHRHMETAES (208 aa)). 2 disordered regions span residues 1307 to 1339 (YHVS…SSDQ) and 1352 to 1416 (DKRH…GGSV). A compositionally biased stretch (low complexity) spans 1359-1369 (DTMSISTSISS). Residues 1370-1392 (PTNRQQSSSQPNTHPYLSNQPTS) are compositionally biased toward polar residues.

Belongs to the calcium channel subunit alpha-2/delta family.

The protein resides in the membrane. This chain is VWFA and cache domain-containing protein CG16868, found in Drosophila melanogaster (Fruit fly).